The primary structure comprises 525 residues: GMP synthase [glutamine-hydrolyzing] (525 aa).

A Glutamine amidotransferase type-1 domain is found at Arg9–Leu207. Cys86 serves as the catalytic Nucleophile. Catalysis depends on residues His181 and Glu183. The 193-residue stretch at Trp208 to Arg400 folds into the GMPS ATP-PPase domain. Position 235–241 (Ser235–Ser241) interacts with ATP.

Homodimer.

It carries out the reaction XMP + L-glutamine + ATP + H2O = GMP + L-glutamate + AMP + diphosphate + 2 H(+). It functions in the pathway purine metabolism; GMP biosynthesis; GMP from XMP (L-Gln route): step 1/1. Its function is as follows. Catalyzes the synthesis of GMP from XMP. In Escherichia coli O8 (strain IAI1), this protein is GMP synthase [glutamine-hydrolyzing].